A 633-amino-acid polypeptide reads, in one-letter code: Threonine--tRNA ligase (633 aa).

The region spanning 1–59 (MIRITFSAEQKVKEYSGKVTGFDILQPDVLKEAIAFKVNGELHDLSREIEADAEIEVIQ) is the TGS domain. A catalytic region spans residues 240–532 (DHRKIAKDMD…LIENYAGKFP (293 aa)). Zn(2+) contacts are provided by Cys-332, His-383, and His-509.

Belongs to the class-II aminoacyl-tRNA synthetase family. As to quaternary structure, homodimer. Requires Zn(2+) as cofactor.

It localises to the cytoplasm. The enzyme catalyses tRNA(Thr) + L-threonine + ATP = L-threonyl-tRNA(Thr) + AMP + diphosphate + H(+). Its function is as follows. Catalyzes the attachment of threonine to tRNA(Thr) in a two-step reaction: L-threonine is first activated by ATP to form Thr-AMP and then transferred to the acceptor end of tRNA(Thr). Also edits incorrectly charged L-seryl-tRNA(Thr). This is Threonine--tRNA ligase from Wolbachia sp. subsp. Drosophila simulans (strain wRi).